Here is a 78-residue protein sequence, read N- to C-terminus: Small ribosomal subunit protein eS21 (78 aa).

It belongs to the eukaryotic ribosomal protein eS21 family.

This Dictyostelium discoideum (Social amoeba) protein is Small ribosomal subunit protein eS21 (rps21).